A 320-amino-acid chain; its full sequence is Methionyl-tRNA formyltransferase (320 aa).

114 to 117 (SLLP) is a (6S)-5,6,7,8-tetrahydrofolate binding site.

Belongs to the Fmt family.

The catalysed reaction is L-methionyl-tRNA(fMet) + (6R)-10-formyltetrahydrofolate = N-formyl-L-methionyl-tRNA(fMet) + (6S)-5,6,7,8-tetrahydrofolate + H(+). In terms of biological role, attaches a formyl group to the free amino group of methionyl-tRNA(fMet). The formyl group appears to play a dual role in the initiator identity of N-formylmethionyl-tRNA by promoting its recognition by IF2 and preventing the misappropriation of this tRNA by the elongation apparatus. The polypeptide is Methionyl-tRNA formyltransferase (Acinetobacter baumannii (strain AB0057)).